The sequence spans 66 residues: Large ribosomal subunit protein bL35 (66 aa).

This sequence belongs to the bacterial ribosomal protein bL35 family.

The sequence is that of Large ribosomal subunit protein bL35 from Moorella thermoacetica (strain ATCC 39073 / JCM 9320).